We begin with the raw amino-acid sequence, 363 residues long: Uroporphyrinogen decarboxylase (363 aa).

Substrate is bound by residues 27 to 31 (RQAGR), D77, Y157, T212, and H333.

This sequence belongs to the uroporphyrinogen decarboxylase family. As to quaternary structure, homodimer.

The protein resides in the cytoplasm. It catalyses the reaction uroporphyrinogen III + 4 H(+) = coproporphyrinogen III + 4 CO2. The protein operates within porphyrin-containing compound metabolism; protoporphyrin-IX biosynthesis; coproporphyrinogen-III from 5-aminolevulinate: step 4/4. Its function is as follows. Catalyzes the decarboxylation of four acetate groups of uroporphyrinogen-III to yield coproporphyrinogen-III. This is Uroporphyrinogen decarboxylase from Cupriavidus necator (strain ATCC 17699 / DSM 428 / KCTC 22496 / NCIMB 10442 / H16 / Stanier 337) (Ralstonia eutropha).